The following is a 181-amino-acid chain: ATP-dependent protease subunit ClpQ (181 aa).

S2 is an active-site residue. Positions 165, 168, and 171 each coordinate Na(+).

A double ring-shaped homohexamer of ClpQ is capped on each side by a ring-shaped ClpY homohexamer. The assembly of the ClpQ/ClpY complex is dependent on binding of ATP.

It localises to the cytoplasm. Protease subunit of a proteasome-like degradation complex. This is ATP-dependent protease subunit ClpQ (clpQ) from Bacillus subtilis (strain 168).